We begin with the raw amino-acid sequence, 72 residues long: Translation initiation factor IF-1 (72 aa).

The region spanning 1-72 (MAKEDSIEMQ…SKGRIVFRSR (72 aa)) is the S1-like domain.

This sequence belongs to the IF-1 family. As to quaternary structure, component of the 30S ribosomal translation pre-initiation complex which assembles on the 30S ribosome in the order IF-2 and IF-3, IF-1 and N-formylmethionyl-tRNA(fMet); mRNA recruitment can occur at any time during PIC assembly.

Its subcellular location is the cytoplasm. Its function is as follows. One of the essential components for the initiation of protein synthesis. Stabilizes the binding of IF-2 and IF-3 on the 30S subunit to which N-formylmethionyl-tRNA(fMet) subsequently binds. Helps modulate mRNA selection, yielding the 30S pre-initiation complex (PIC). Upon addition of the 50S ribosomal subunit IF-1, IF-2 and IF-3 are released leaving the mature 70S translation initiation complex. The sequence is that of Translation initiation factor IF-1 from Aeromonas hydrophila subsp. hydrophila (strain ATCC 7966 / DSM 30187 / BCRC 13018 / CCUG 14551 / JCM 1027 / KCTC 2358 / NCIMB 9240 / NCTC 8049).